The chain runs to 527 residues: Low-affinity Na(+)/H(+) antiporter NhaS1 (527 aa).

11 helical membrane passes run 18–38 (FLIV…VPIL), 41–61 (IPYT…DVKL), 94–114 (WFPI…GIAF), 126–146 (IAFL…IALF), 169–189 (VAVV…TFDL), 196–216 (FVTV…SLSL), 240–260 (ILAE…GMVL), 276–296 (IVSI…FLLI), 311–331 (LILI…FGLS), 352–372 (TVLW…LSVP), and 380–400 (AIID…GLTT).

Belongs to the monovalent cation:proton antiporter 1 (CPA1) transporter (TC 2.A.36) family.

The protein localises to the cell membrane. Na(+)/H(+) antiporter that extrudes sodium in exchange for external protons. Might be able to function at relatively high concentrations of Na(+) ions. Also has Li(+)/H(+) antiport activity under K(+)-rich conditions, but it might not have any physiological relevance. The sequence is that of Low-affinity Na(+)/H(+) antiporter NhaS1 (nhaS1) from Synechocystis sp. (strain ATCC 27184 / PCC 6803 / Kazusa).